Reading from the N-terminus, the 147-residue chain is Large ribosomal subunit protein uL16 (147 aa).

This sequence belongs to the universal ribosomal protein uL16 family. In terms of assembly, part of the 50S ribosomal subunit.

Its function is as follows. Binds 23S rRNA and is also seen to make contacts with the A and possibly P site tRNAs. The sequence is that of Large ribosomal subunit protein uL16 from Finegoldia magna (strain ATCC 29328 / DSM 20472 / WAL 2508) (Peptostreptococcus magnus).